Reading from the N-terminus, the 311-residue chain is Malate dehydrogenase (311 aa).

NAD(+)-binding positions include 7 to 13 (GAAGGIG) and Asp-34. Substrate is bound by residues Arg-81 and Arg-87. NAD(+)-binding positions include Asn-94 and 117–119 (ITN). 2 residues coordinate substrate: Asn-119 and Arg-153. The active-site Proton acceptor is the His-177. Met-227 provides a ligand contact to NAD(+).

This sequence belongs to the LDH/MDH superfamily. MDH type 1 family. Homodimer.

It catalyses the reaction (S)-malate + NAD(+) = oxaloacetate + NADH + H(+). In terms of biological role, catalyzes the reversible oxidation of malate to oxaloacetate. This Histophilus somni (strain 2336) (Haemophilus somnus) protein is Malate dehydrogenase.